A 289-amino-acid chain; its full sequence is Segregation and condensation protein A (289 aa).

Positions 1-18 (MSEDRRSPTDEAPREGEL) are enriched in basic and acidic residues. The segment at 1–24 (MSEDRRSPTDEAPREGELPRSPGD) is disordered.

Belongs to the ScpA family. Component of the Structural Maintenance of Chromosome (SMC) condensin-like complex composed of ScpA, ScpB and the Smc homodimer. ScpA and ScpB bind to the head domain of Smc. The presence of the three proteins is required for the association of the complex with DNA.

The protein resides in the cytoplasm. A conditionally essential component of the chromosome segregation machinery. Participates in chromosomal partition during cell division. Important for positioning of ParB-parS complexes (ori of replication) and of the ter replication site, as well as for segration of the ParB-parS complex and thus chromosome segregation. May act via the formation of a condensin-like complex containing Smc, ScpA and ScpB that pulls DNA away from mid-cell into both cell halves. This Myxococcus xanthus (strain DK1622) protein is Segregation and condensation protein A.